The following is a 552-amino-acid chain: FERRY endosomal RAB5 effector complex subunit 3 (552 aa).

Serine 79 bears the Phosphoserine mark.

In terms of assembly, component of the FERRY complex composed of five subunits, TBCK, PPP1R21, FERRY3, CRYZL1 and GATD1 with a ratio of 1:2:1:2:4, respectively.

The protein resides in the cytoplasm. The protein localises to the early endosome. Functionally, component of the FERRY complex (Five-subunit Endosomal Rab5 and RNA/ribosome intermediary). The FERRY complex directly interacts with mRNAs and RAB5A, and functions as a RAB5A effector involved in the localization and the distribution of specific mRNAs most likely by mediating their endosomal transport. The complex recruits mRNAs and ribosomes to early endosomes through direct mRNA-interaction. Plays a role in mast cell degranulation. In Mus musculus (Mouse), this protein is FERRY endosomal RAB5 effector complex subunit 3.